Here is a 307-residue protein sequence, read N- to C-terminus: Ribosomal protein L11 methyltransferase (307 aa).

Positions 144, 165, 187, and 235 each coordinate S-adenosyl-L-methionine.

It belongs to the methyltransferase superfamily. PrmA family.

It localises to the cytoplasm. It catalyses the reaction L-lysyl-[protein] + 3 S-adenosyl-L-methionine = N(6),N(6),N(6)-trimethyl-L-lysyl-[protein] + 3 S-adenosyl-L-homocysteine + 3 H(+). In terms of biological role, methylates ribosomal protein L11. This chain is Ribosomal protein L11 methyltransferase, found in Psychrobacter sp. (strain PRwf-1).